Consider the following 568-residue polypeptide: Potassium-transporting ATPase potassium-binding subunit (568 aa).

11 consecutive transmembrane segments (helical) span residues 6 to 26, 64 to 84, 135 to 155, 179 to 199, 254 to 274, 285 to 305, 382 to 402, 419 to 439, 459 to 481, 488 to 508, and 529 to 549; these read ILQI…IGGF, TGYA…TYLI, IALA…AIAF, LYIL…QGVI, LANL…TYTF, WALL…VYPA, GLYG…LMVG, MVML…AAGI, VLYG…SANT, LGIA…AAAG, and LFVT…FFPA.

It belongs to the KdpA family. The system is composed of three essential subunits: KdpA, KdpB and KdpC.

The protein localises to the cell inner membrane. Functionally, part of the high-affinity ATP-driven potassium transport (or Kdp) system, which catalyzes the hydrolysis of ATP coupled with the electrogenic transport of potassium into the cytoplasm. This subunit binds the periplasmic potassium ions and delivers the ions to the membrane domain of KdpB through an intramembrane tunnel. The polypeptide is Potassium-transporting ATPase potassium-binding subunit (Solibacter usitatus (strain Ellin6076)).